The following is a 152-amino-acid chain: Acidic phospholipase A2 homolog textilotoxin D chain (152 aa).

The first 19 residues, 1–19, serve as a signal peptide directing secretion; the sequence is MHPAHLLVLLGVCVSLLGA. 7 disulfides stabilise this stretch: cysteine 38–cysteine 104, cysteine 54–cysteine 151, cysteine 56–cysteine 72, cysteine 71–cysteine 132, cysteine 78–cysteine 125, cysteine 88–cysteine 118, and cysteine 111–cysteine 123. N-linked (GlcNAc...) asparagine glycosylation occurs at asparagine 112.

The protein belongs to the phospholipase A2 family. Group I subfamily. D49 sub-subfamily. As to quaternary structure, heterohexamer. 2 forms exist: 2 A or 2 B chains, 2 C chains and 2 covalently-linked D chains, and 1 A or 1 B, 1 C, 2 covalently-linked D chains and 2 differentially glycosylated covalently-linked D chains. Textilotoxin was originally described as pentameric. In terms of tissue distribution, expressed by the venom gland.

The protein localises to the secreted. In terms of biological role, snake venom oligomeric phospholipase A2 that has potent presynaptic neurotoxicity. Chain D is not itself neurotoxic, but it is essential for the neurotoxicity of textilotoxin. Chain D possesses a very low phospholipase activity. The polypeptide is Acidic phospholipase A2 homolog textilotoxin D chain (Pseudonaja textilis (Eastern brown snake)).